The sequence spans 490 residues: Glutamyl-tRNA(Gln) amidotransferase subunit A (490 aa).

Catalysis depends on charge relay system residues K80 and S155. Residue S179 is the Acyl-ester intermediate of the active site.

Belongs to the amidase family. GatA subfamily. As to quaternary structure, heterotrimer of A, B and C subunits.

The enzyme catalyses L-glutamyl-tRNA(Gln) + L-glutamine + ATP + H2O = L-glutaminyl-tRNA(Gln) + L-glutamate + ADP + phosphate + H(+). Its function is as follows. Allows the formation of correctly charged Gln-tRNA(Gln) through the transamidation of misacylated Glu-tRNA(Gln) in organisms which lack glutaminyl-tRNA synthetase. The reaction takes place in the presence of glutamine and ATP through an activated gamma-phospho-Glu-tRNA(Gln). This Brevibacillus brevis (strain 47 / JCM 6285 / NBRC 100599) protein is Glutamyl-tRNA(Gln) amidotransferase subunit A.